The chain runs to 86 residues: Large ribosomal subunit protein uL23 (86 aa).

This sequence belongs to the universal ribosomal protein uL23 family. As to quaternary structure, part of the 50S ribosomal subunit. Contacts protein L29.

In terms of biological role, binds to 23S rRNA. One of the proteins that surrounds the polypeptide exit tunnel on the outside of the ribosome. This is Large ribosomal subunit protein uL23 from Methanobrevibacter smithii (strain ATCC 35061 / DSM 861 / OCM 144 / PS).